The following is a 282-amino-acid chain: U1 small nuclear ribonucleoprotein A (282 aa).

2 consecutive RRM domains span residues 10-89 and 208-282; these read NTIY…YSKT and HILF…FAKK.

Belongs to the RRM U1 A/B'' family. U1 snRNP is composed of the 7 core Sm proteins snrpb, snrpd1, snrpd2, snrpd3, snrpe, snrpf and snrpg that assemble in a heptameric protein ring on the Sm site of the small nuclear RNA to form the core snRNP, and at least three U1 snRNP-specific proteins snrnp70/U1-70K, snrpa/U1-A and snrpc/U1-C.

It localises to the nucleus. In terms of biological role, component of the spliceosomal U1 snRNP, which is essential for recognition of the pre-mRNA 5' splice-site and the subsequent assembly of the spliceosome. U1 snRNP is the first snRNP to interact with pre-mRNA. This interaction is required for the subsequent binding of U2 snRNP and the U4/U6/U5 tri-snRNP. Snrpa binds stem loop II of U1 snRNA. The protein is U1 small nuclear ribonucleoprotein A (snrpa) of Xenopus laevis (African clawed frog).